The chain runs to 446 residues: Low-affinity gluconate transporter (446 aa).

Residue Met-1 is a topological domain, cytoplasmic. A helical membrane pass occupies residues 2–22 (TTLTLVLTAVGSVLLLLFLVM). Over 23–26 (KARM) the chain is Periplasmic. A helical transmembrane segment spans residues 27-47 (HAFLALMVVSMGAGLFSGMPL). Residues 48–58 (DKIAATMEKGM) are Cytoplasmic-facing. The chain crosses the membrane as a helical span at residues 59 to 79 (GGTLGFLAVVVALGAMFGKIL). Residues 80 to 109 (HETGAVDQIAVKMLKSFGHSRAHYAIGLAG) are Periplasmic-facing. The helical transmembrane segment at 110–130 (LVCALPLFFEVAIVLLISVAF) threads the bilayer. Residues 131–142 (SMARHTGTNLVK) lie on the Cytoplasmic side of the membrane. The helical transmembrane segment at 143–163 (LVIPLFAGVAAAAAFLVPGPA) threads the bilayer. At 164-176 (PMLLASQMNADFG) the chain is on the periplasmic side. A helical membrane pass occupies residues 177-197 (WMILIGLCAAIPGMIIAGPLW). The Cytoplasmic segment spans residues 198–225 (GNFISRYVELHIPDDISEPHLGEGKMPS). A helical transmembrane segment spans residues 226 to 246 (FGFSLSLILLPLVLVGLKTIA). At 247–261 (ARFVPEGSTAYEWFE) the chain is on the periplasmic side. Residues 262–282 (FIGHPFTAILVACLVAIYGLA) traverse the membrane as a helical segment. Topologically, residues 283–294 (MRQGMPKDKVME) are cytoplasmic. A helical transmembrane segment spans residues 295-315 (ICGHALQPAGIILLVIGAGGV). Over 316–330 (FKQVLVDSGVGPALG) the chain is Periplasmic. The helical transmembrane segment at 331–351 (EALTGMGLPIAITCFVLAAAV) threads the bilayer. Position 352 (Arg-352) is a topological domain, cytoplasmic. The helical transmembrane segment at 353-373 (IIQGSATVACLTAVGLVMPVI) threads the bilayer. The Periplasmic segment spans residues 374-387 (EQLNYSGAQMAALS). Residues 388 to 408 (ICIAGGSIVVSHVNDAGFWLF) form a helical membrane-spanning segment. Residues 409–424 (GKFTGATEAETLKTWT) lie on the Cytoplasmic side of the membrane. Residues 425 to 445 (MMETILGTVGAIVGMIAFQLL) form a helical membrane-spanning segment. A topological domain (periplasmic) is located at residue Ser-446.

Belongs to the GntP permease family.

The protein localises to the cell inner membrane. Part of the gluconate utilization system Gnt-I; low-affinity intake of gluconate. The protein is Low-affinity gluconate transporter (gntU) of Escherichia coli O157:H7.